A 400-amino-acid chain; its full sequence is S-adenosylmethionine synthase (400 aa).

137 to 142 is an ATP binding site; sequence GEGSGD.

Belongs to the AdoMet synthase 2 family. Mg(2+) serves as cofactor.

The catalysed reaction is L-methionine + ATP + H2O = S-adenosyl-L-methionine + phosphate + diphosphate. It participates in amino-acid biosynthesis; S-adenosyl-L-methionine biosynthesis; S-adenosyl-L-methionine from L-methionine: step 1/1. In terms of biological role, catalyzes the formation of S-adenosylmethionine from methionine and ATP. This chain is S-adenosylmethionine synthase, found in Haloarcula marismortui (strain ATCC 43049 / DSM 3752 / JCM 8966 / VKM B-1809) (Halobacterium marismortui).